The following is a 290-amino-acid chain: Multiple sugar-binding transport system permease protein MsmF (290 aa).

Transmembrane regions (helical) follow at residues 12–32 (GWTF…FPMF), 72–92 (FTLV…IIIA), 104–124 (FFRA…SLIF), 156–176 (VIAS…ILFL), 201–221 (FWSV…IMAL), 231–253 (IFAL…VYNY), and 260–280 (YGYA…VSVL). The region spanning 70 to 281 (IGFTLVLTLA…IIIGIVSVLQ (212 aa)) is the ABC transmembrane type-1 domain.

This sequence belongs to the binding-protein-dependent transport system permease family. MalFG subfamily.

Its subcellular location is the cell membrane. Functionally, involved in a binding protein-dependent transport system responsible for the uptake of melibiose, raffinose and isomaltotriose. The chain is Multiple sugar-binding transport system permease protein MsmF (msmF) from Streptococcus mutans serotype c (strain ATCC 700610 / UA159).